Reading from the N-terminus, the 418-residue chain is Gamma-glutamyl phosphate reductase (418 aa).

This sequence belongs to the gamma-glutamyl phosphate reductase family.

The protein localises to the cytoplasm. It catalyses the reaction L-glutamate 5-semialdehyde + phosphate + NADP(+) = L-glutamyl 5-phosphate + NADPH + H(+). Its pathway is amino-acid biosynthesis; L-proline biosynthesis; L-glutamate 5-semialdehyde from L-glutamate: step 2/2. Functionally, catalyzes the NADPH-dependent reduction of L-glutamate 5-phosphate into L-glutamate 5-semialdehyde and phosphate. The product spontaneously undergoes cyclization to form 1-pyrroline-5-carboxylate. The chain is Gamma-glutamyl phosphate reductase from Chlorobium chlorochromatii (strain CaD3).